The sequence spans 259 residues: 3-deoxy-manno-octulosonate cytidylyltransferase (259 aa).

The protein belongs to the KdsB family.

The protein localises to the cytoplasm. The catalysed reaction is 3-deoxy-alpha-D-manno-oct-2-ulosonate + CTP = CMP-3-deoxy-beta-D-manno-octulosonate + diphosphate. It participates in nucleotide-sugar biosynthesis; CMP-3-deoxy-D-manno-octulosonate biosynthesis; CMP-3-deoxy-D-manno-octulosonate from 3-deoxy-D-manno-octulosonate and CTP: step 1/1. It functions in the pathway bacterial outer membrane biogenesis; lipopolysaccharide biosynthesis. In terms of biological role, activates KDO (a required 8-carbon sugar) for incorporation into bacterial lipopolysaccharide in Gram-negative bacteria. The protein is 3-deoxy-manno-octulosonate cytidylyltransferase of Actinobacillus succinogenes (strain ATCC 55618 / DSM 22257 / CCUG 43843 / 130Z).